The sequence spans 252 residues: Streptothricin hydrolase (252 aa).

The active-site Nucleophile is the Cys-158. Residues Ala-230–Ser-242 show a composition bias toward low complexity. The segment at Ala-230 to Arg-252 is disordered. The segment covering Pro-243–Arg-252 has biased composition (pro residues).

It belongs to the isochorismatase family.

The enzyme catalyses streptothricin F + H2O = streptothricin F acid. Catalyzes the hydrolysis of the amide bond of streptolidine lactam, thereby conferring streptothricin (ST) resistance. Can hydrolyze streptothricin-F and streptothricin-D. However, this strain is believed to be a ST nonproducer, which raises the possibility that its true role may not be its involvement in self-resistance to STs. May catalyze the hydrolysis of naturally occurring cyclic amide compounds that are structurally related to STs. The sequence is that of Streptothricin hydrolase (sttH) from Streptomyces noursei (Streptomyces albulus).